The following is a 471-amino-acid chain: Glutamate--tRNA ligase (471 aa).

The 'HIGH' region motif lies at 9 to 19; it reads PSPTGYLHVGG. Positions 98, 100, 125, and 127 each coordinate Zn(2+). The 'KMSKS' region signature appears at 237–241; it reads KLSKR. Lys-240 contacts ATP.

This sequence belongs to the class-I aminoacyl-tRNA synthetase family. Glutamate--tRNA ligase type 1 subfamily. In terms of assembly, monomer. It depends on Zn(2+) as a cofactor.

The protein localises to the cytoplasm. It carries out the reaction tRNA(Glu) + L-glutamate + ATP = L-glutamyl-tRNA(Glu) + AMP + diphosphate. Functionally, catalyzes the attachment of glutamate to tRNA(Glu) in a two-step reaction: glutamate is first activated by ATP to form Glu-AMP and then transferred to the acceptor end of tRNA(Glu). The sequence is that of Glutamate--tRNA ligase from Salmonella enteritidis PT4 (strain P125109).